The chain runs to 362 residues: Phosphoserine aminotransferase (362 aa).

S9 and R42 together coordinate L-glutamate. Residues 76–77 (GR), W102, T153, D174, and Q197 contribute to the pyridoxal 5'-phosphate site. K198 carries the N6-(pyridoxal phosphate)lysine modification. 239–240 (NT) contacts pyridoxal 5'-phosphate.

The protein belongs to the class-V pyridoxal-phosphate-dependent aminotransferase family. SerC subfamily. Homodimer. The cofactor is pyridoxal 5'-phosphate.

It is found in the cytoplasm. The catalysed reaction is O-phospho-L-serine + 2-oxoglutarate = 3-phosphooxypyruvate + L-glutamate. The enzyme catalyses 4-(phosphooxy)-L-threonine + 2-oxoglutarate = (R)-3-hydroxy-2-oxo-4-phosphooxybutanoate + L-glutamate. Its pathway is amino-acid biosynthesis; L-serine biosynthesis; L-serine from 3-phospho-D-glycerate: step 2/3. It participates in cofactor biosynthesis; pyridoxine 5'-phosphate biosynthesis; pyridoxine 5'-phosphate from D-erythrose 4-phosphate: step 3/5. In terms of biological role, catalyzes the reversible conversion of 3-phosphohydroxypyruvate to phosphoserine and of 3-hydroxy-2-oxo-4-phosphonooxybutanoate to phosphohydroxythreonine. This Escherichia coli O139:H28 (strain E24377A / ETEC) protein is Phosphoserine aminotransferase.